A 425-amino-acid polypeptide reads, in one-letter code: UPF0597 protein VP2173 (425 aa).

It belongs to the UPF0597 family.

The sequence is that of UPF0597 protein VP2173 from Vibrio parahaemolyticus serotype O3:K6 (strain RIMD 2210633).